The sequence spans 743 residues: MVSEKTMAERVLALMGRPNNIRNIGIIAHIHHGKTTLTDNLLAGAGMLSEELAGDAMFTWWHEQEREREMTIYGAAVSMVHEYEGDDYLINLIDTPGHVEFGGEVTRAVRAIDGAVVVVDFVDGIMPQTETVLKQALREYVKPVLFINKVDRAIKELQLPPNKIMERLAEIVVGVNDLIERYAPEEFKDKWKVSVQNGTVAFGSALHNWALSVPYMQKTGIGFKQIAEIYNTAADAKEIRRRVWEIAPLYRVVLDMVVRHLPSPKEAQKYRVPKLWHGDLNSKYGKAMLEADPNGPAVAVVTKVIVDKTSKQETAIARVWSGTIRRGMEVWLLNANKKVRLQQVGVFKGIQKIQIEEAKAGNIIAISGVRDLQSGETIVEPEPDGSKPNIPPFEAIKHIFDPVVTKAIEPKDPRDLPKLIEVLKLIQKEDPTLKVEIDQESGQILISGLGDLHLEIVEYRIKNDFKVDIITSNPIVVYRESVKGQAGPVEGKSPNKLNKFYITVEKMPDELYWKLREKLLKGELPEGKIKKMNEDIIKHLMSLGFTREEAQRCKVIYRENMFFDMTRGIIHIGEVIDMVMDAFMQVMDHGPIAWEPCIGLIVKLTDAQLHEDAIHRGPGQVIPAVREAIKLAMKDAGLVLYEPVQVILVDVPPDYIGDVTALINSRRGAILDIQTEEDRALIKAKVPVREMIGFTDTLRSATSGRGVWYLVDQVYEPVPRELFDQIVREIRQRKGLPLDADIV.

The tr-type G domain occupies 19-265 (NNIRNIGIIA…MVVRHLPSPK (247 aa)). Residues 28–35 (AHIHHGKT), 94–98 (DTPGH), and 148–151 (NKVD) each bind GTP. Diphthamide is present on histidine 615.

It belongs to the TRAFAC class translation factor GTPase superfamily. Classic translation factor GTPase family. EF-G/EF-2 subfamily.

The protein resides in the cytoplasm. Catalyzes the GTP-dependent ribosomal translocation step during translation elongation. During this step, the ribosome changes from the pre-translocational (PRE) to the post-translocational (POST) state as the newly formed A-site-bound peptidyl-tRNA and P-site-bound deacylated tRNA move to the P and E sites, respectively. Catalyzes the coordinated movement of the two tRNA molecules, the mRNA and conformational changes in the ribosome. This is Elongation factor 2 from Nanoarchaeum equitans (strain Kin4-M).